A 439-amino-acid chain; its full sequence is Ribosomal protein uS12 methylthiotransferase RimO (439 aa).

In terms of domain architecture, MTTase N-terminal spans 3-113; the sequence is HKVGFVSLGC…VVNAVHQHLP (111 aa). 6 residues coordinate [4Fe-4S] cluster: C12, C48, C77, C144, C148, and C151. In terms of domain architecture, Radical SAM core spans 130-367; that stretch reads LTPRHYAYLK…MQVQAEISRN (238 aa). One can recognise a TRAM domain in the interval 370-436; sequence KNKIGSTQTV…DYDLYGDLEY (67 aa).

The protein belongs to the methylthiotransferase family. RimO subfamily. Requires [4Fe-4S] cluster as cofactor.

It is found in the cytoplasm. It catalyses the reaction L-aspartate(89)-[ribosomal protein uS12]-hydrogen + (sulfur carrier)-SH + AH2 + 2 S-adenosyl-L-methionine = 3-methylsulfanyl-L-aspartate(89)-[ribosomal protein uS12]-hydrogen + (sulfur carrier)-H + 5'-deoxyadenosine + L-methionine + A + S-adenosyl-L-homocysteine + 2 H(+). Catalyzes the methylthiolation of an aspartic acid residue of ribosomal protein uS12. In Legionella pneumophila (strain Paris), this protein is Ribosomal protein uS12 methylthiotransferase RimO.